The following is a 173-amino-acid chain: Peptide deformylase (173 aa).

Cysteine 98 and histidine 140 together coordinate Fe cation. Residue glutamate 141 is part of the active site. Position 144 (histidine 144) interacts with Fe cation.

The protein belongs to the polypeptide deformylase family. The cofactor is Fe(2+).

The catalysed reaction is N-terminal N-formyl-L-methionyl-[peptide] + H2O = N-terminal L-methionyl-[peptide] + formate. In terms of biological role, removes the formyl group from the N-terminal Met of newly synthesized proteins. Requires at least a dipeptide for an efficient rate of reaction. N-terminal L-methionine is a prerequisite for activity but the enzyme has broad specificity at other positions. The protein is Peptide deformylase of Caulobacter sp. (strain K31).